A 320-amino-acid polypeptide reads, in one-letter code: UV DNA damage endonuclease (320 aa).

The protein belongs to the uve1/UvsE family.

Component in a DNA repair pathway. Removal of UV LIGHT damaged nucleotides. Recognizes pyrimidine dimers and cleave a phosphodiester bond immediately 5' to the lesion. The sequence is that of UV DNA damage endonuclease from Bacillus velezensis (strain DSM 23117 / BGSC 10A6 / LMG 26770 / FZB42) (Bacillus amyloliquefaciens subsp. plantarum).